Here is a 181-residue protein sequence, read N- to C-terminus: Large ribosomal subunit protein uL6 (181 aa).

It belongs to the universal ribosomal protein uL6 family. As to quaternary structure, part of the 50S ribosomal subunit.

In terms of biological role, this protein binds to the 23S rRNA, and is important in its secondary structure. It is located near the subunit interface in the base of the L7/L12 stalk, and near the tRNA binding site of the peptidyltransferase center. The protein is Large ribosomal subunit protein uL6 of Phytoplasma mali (strain AT).